A 191-amino-acid polypeptide reads, in one-letter code: Peptidyl-tRNA hydrolase (191 aa).

Tyr-14 serves as a coordination point for tRNA. The active-site Proton acceptor is His-19. 3 residues coordinate tRNA: Tyr-64, Asn-66, and Asn-112.

Belongs to the PTH family. As to quaternary structure, monomer.

Its subcellular location is the cytoplasm. It carries out the reaction an N-acyl-L-alpha-aminoacyl-tRNA + H2O = an N-acyl-L-amino acid + a tRNA + H(+). In terms of biological role, hydrolyzes ribosome-free peptidyl-tRNAs (with 1 or more amino acids incorporated), which drop off the ribosome during protein synthesis, or as a result of ribosome stalling. Its function is as follows. Catalyzes the release of premature peptidyl moieties from peptidyl-tRNA molecules trapped in stalled 50S ribosomal subunits, and thus maintains levels of free tRNAs and 50S ribosomes. This Clostridium botulinum (strain Alaska E43 / Type E3) protein is Peptidyl-tRNA hydrolase.